A 428-amino-acid chain; its full sequence is Protein clpf-1 (428 aa).

Glu16 and Arg56 together coordinate ATP. Positions 99–118 are disordered; that stretch reads KKREEQAVSNSSKPKGPRLL. 124-129 provides a ligand contact to ATP; sequence DVGKTT.

It belongs to the Clp1 family. Clp1 subfamily.

Its subcellular location is the nucleus. Its function is as follows. Required for endonucleolytic cleavage during polyadenylation-dependent pre-mRNA 3'-end formation. The protein is Protein clpf-1 of Caenorhabditis briggsae.